The following is a 163-amino-acid chain: Phosphopantetheine adenylyltransferase (163 aa).

A substrate-binding site is contributed by Ser11. Residues 11–12 (SF) and His19 each bind ATP. Substrate is bound by residues Lys43, Ala76, and Arg90. Residues 91 to 93 (GLR), Glu101, and 126 to 132 (WQALSSS) each bind ATP.

It belongs to the bacterial CoaD family. Homohexamer. Mg(2+) serves as cofactor.

Its subcellular location is the cytoplasm. The enzyme catalyses (R)-4'-phosphopantetheine + ATP + H(+) = 3'-dephospho-CoA + diphosphate. The protein operates within cofactor biosynthesis; coenzyme A biosynthesis; CoA from (R)-pantothenate: step 4/5. In terms of biological role, reversibly transfers an adenylyl group from ATP to 4'-phosphopantetheine, yielding dephospho-CoA (dPCoA) and pyrophosphate. In Streptococcus pyogenes serotype M6 (strain ATCC BAA-946 / MGAS10394), this protein is Phosphopantetheine adenylyltransferase.